The chain runs to 1020 residues: Glycine dehydrogenase (decarboxylating), mitochondrial (1020 aa).

The N-terminal 35 residues, 1-35, are a transit peptide targeting the mitochondrion; sequence MQSCARAWGLRLGRGVGGGRRLAGGSGPCWAPRSR. Residues 21-46 are disordered; that stretch reads RLAGGSGPCWAPRSRDSSSGGGDSAA. N6-acetyllysine is present on residues Lys-447, Lys-514, Lys-648, and Lys-664. Lys-754 is modified (N6-(pyridoxal phosphate)lysine).

Belongs to the GcvP family. In terms of assembly, homodimer. Interacts with GCSH. The glycine cleavage system is composed of four proteins: P (GLDC), T (GCST), L (DLD) and H (GCSH). Requires pyridoxal 5'-phosphate as cofactor.

It is found in the mitochondrion. It carries out the reaction N(6)-[(R)-lipoyl]-L-lysyl-[glycine-cleavage complex H protein] + glycine + H(+) = N(6)-[(R)-S(8)-aminomethyldihydrolipoyl]-L-lysyl-[glycine-cleavage complex H protein] + CO2. With respect to regulation, stimulated by lipoic acid. Inhibited in presence of methylamine. Functionally, the glycine cleavage system catalyzes the degradation of glycine. The P protein (GLDC) binds the alpha-amino group of glycine through its pyridoxal phosphate cofactor; CO(2) is released and the remaining methylamine moiety is then transferred to the lipoamide cofactor of the H protein (GCSH). The polypeptide is Glycine dehydrogenase (decarboxylating), mitochondrial (Homo sapiens (Human)).